We begin with the raw amino-acid sequence, 215 residues long: Phosphatidylserine decarboxylase proenzyme (215 aa).

Ser-185 serves as the catalytic Schiff-base intermediate with substrate; via pyruvic acid. The residue at position 185 (Ser-185) is a Pyruvic acid (Ser); by autocatalysis.

The protein belongs to the phosphatidylserine decarboxylase family. PSD-A subfamily. In terms of assembly, heterodimer of a large membrane-associated beta subunit and a small pyruvoyl-containing alpha subunit. Requires pyruvate as cofactor. Is synthesized initially as an inactive proenzyme. Formation of the active enzyme involves a self-maturation process in which the active site pyruvoyl group is generated from an internal serine residue via an autocatalytic post-translational modification. Two non-identical subunits are generated from the proenzyme in this reaction, and the pyruvate is formed at the N-terminus of the alpha chain, which is derived from the carboxyl end of the proenzyme. The post-translation cleavage follows an unusual pathway, termed non-hydrolytic serinolysis, in which the side chain hydroxyl group of the serine supplies its oxygen atom to form the C-terminus of the beta chain, while the remainder of the serine residue undergoes an oxidative deamination to produce ammonia and the pyruvoyl prosthetic group on the alpha chain.

It is found in the cell membrane. It catalyses the reaction a 1,2-diacyl-sn-glycero-3-phospho-L-serine + H(+) = a 1,2-diacyl-sn-glycero-3-phosphoethanolamine + CO2. Its pathway is phospholipid metabolism; phosphatidylethanolamine biosynthesis; phosphatidylethanolamine from CDP-diacylglycerol: step 2/2. In terms of biological role, catalyzes the formation of phosphatidylethanolamine (PtdEtn) from phosphatidylserine (PtdSer). This Streptomyces avermitilis (strain ATCC 31267 / DSM 46492 / JCM 5070 / NBRC 14893 / NCIMB 12804 / NRRL 8165 / MA-4680) protein is Phosphatidylserine decarboxylase proenzyme.